The primary structure comprises 244 residues: Protein crossbronx (244 aa).

Residues 20–176 (QQEYKILAEY…VQKNIKESKE (157 aa)) enclose the UBC core domain. Residues 209-244 (AGRSKQTEPSAQQANGGHATGLSWVKEGEFKPLSIE) form a disordered region.

The protein belongs to the ubiquitin-conjugating enzyme family. FTS subfamily.

The chain is Protein crossbronx (cbx) from Drosophila erecta (Fruit fly).